The following is a 641-amino-acid chain: Vacuolar protein sorting-associated protein 52 (641 aa).

Residues 81–110 (LTEFTNRLSNYTQDLDFIKKKSNELQSLLE) adopt a coiled-coil conformation. S602 carries the phosphoserine modification.

It belongs to the VPS52 family. Component of the Golgi-associated retrograde protein (GARP) complex, also called VFT (VPS fifty-three) complex, composed of VPS51, VPS52, VPS53 and VPS54. Also interacts with TLG1 and YPT6.

Its subcellular location is the golgi apparatus. It is found in the trans-Golgi network membrane. It localises to the endosome membrane. The protein resides in the cytoplasm. The protein localises to the cytoskeleton. Its function is as follows. Involved in retrograde transport from early and late endosomes to late Golgi by linking the vesicle through the t-SNARE TGL1 to the Golgi, leading to the membrane fusion between late Golgi and endosomal vesicles. May also be involved in the actin cytoskeleton organization. This chain is Vacuolar protein sorting-associated protein 52 (VPS52), found in Saccharomyces cerevisiae (strain ATCC 204508 / S288c) (Baker's yeast).